Reading from the N-terminus, the 78-residue chain is MPQQRKGGRRRRKVDLIAANHIDYVDYKDVDLLKHFISERGKILPRSVTGTSAKNQRKVANAIKRARIMGLLPFVAED.

It belongs to the bacterial ribosomal protein bS18 family. Part of the 30S ribosomal subunit. Forms a tight heterodimer with protein bS6.

Its function is as follows. Binds as a heterodimer with protein bS6 to the central domain of the 16S rRNA, where it helps stabilize the platform of the 30S subunit. The sequence is that of Small ribosomal subunit protein bS18 from Lactobacillus delbrueckii subsp. bulgaricus (strain ATCC 11842 / DSM 20081 / BCRC 10696 / JCM 1002 / NBRC 13953 / NCIMB 11778 / NCTC 12712 / WDCM 00102 / Lb 14).